The chain runs to 101 residues: NAD(P)H-quinone oxidoreductase subunit 4L, chloroplastic (101 aa).

3 helical membrane passes run 2–22, 27–46, and 61–81; these read MLEHVLILSAYLFSIGIYGLI, MVRALMCLELILNAVNMNLI, and IFSIFVIAIAAAEAAIGPAIV.

It belongs to the complex I subunit 4L family. NDH is composed of at least 16 different subunits, 5 of which are encoded in the nucleus.

The protein localises to the plastid. It localises to the chloroplast thylakoid membrane. The enzyme catalyses a plastoquinone + NADH + (n+1) H(+)(in) = a plastoquinol + NAD(+) + n H(+)(out). It catalyses the reaction a plastoquinone + NADPH + (n+1) H(+)(in) = a plastoquinol + NADP(+) + n H(+)(out). Functionally, NDH shuttles electrons from NAD(P)H:plastoquinone, via FMN and iron-sulfur (Fe-S) centers, to quinones in the photosynthetic chain and possibly in a chloroplast respiratory chain. The immediate electron acceptor for the enzyme in this species is believed to be plastoquinone. Couples the redox reaction to proton translocation, and thus conserves the redox energy in a proton gradient. This Drimys granadensis protein is NAD(P)H-quinone oxidoreductase subunit 4L, chloroplastic.